Reading from the N-terminus, the 356-residue chain is Alanine racemase, catabolic (356 aa).

Lys35 functions as the Proton acceptor; specific for D-alanine in the catalytic mechanism. Lys35 carries the post-translational modification N6-(pyridoxal phosphate)lysine. Position 130 (Arg130) interacts with substrate. Tyr253 serves as the catalytic Proton acceptor; specific for L-alanine. Met301 is a binding site for substrate.

It belongs to the alanine racemase family. Pyridoxal 5'-phosphate is required as a cofactor.

It catalyses the reaction L-alanine = D-alanine. Functionally, isomerizes L-alanine to D-alanine which is then oxidized to pyruvate by DadA. The sequence is that of Alanine racemase, catabolic (dadX) from Salmonella typhi.